We begin with the raw amino-acid sequence, 283 residues long: NAD kinase (283 aa).

D66 functions as the Proton acceptor in the catalytic mechanism. NAD(+)-binding positions include 66–67 (DG), 134–135 (ND), R145, R163, D165, and 176–181 (TAYSMS).

This sequence belongs to the NAD kinase family. A divalent metal cation serves as cofactor.

It is found in the cytoplasm. It catalyses the reaction NAD(+) + ATP = ADP + NADP(+) + H(+). In terms of biological role, involved in the regulation of the intracellular balance of NAD and NADP, and is a key enzyme in the biosynthesis of NADP. Catalyzes specifically the phosphorylation on 2'-hydroxyl of the adenosine moiety of NAD to yield NADP. In Chlorobaculum tepidum (strain ATCC 49652 / DSM 12025 / NBRC 103806 / TLS) (Chlorobium tepidum), this protein is NAD kinase.